The following is a 209-amino-acid chain: NADH-ubiquinone oxidoreductase subunit 9 (209 aa).

This sequence belongs to the complex I 30 kDa subunit family. Complex I is composed of about 45 different subunits.

Its subcellular location is the mitochondrion inner membrane. It catalyses the reaction a ubiquinone + NADH + 5 H(+)(in) = a ubiquinol + NAD(+) + 4 H(+)(out). Functionally, core subunit of the mitochondrial membrane respiratory chain NADH dehydrogenase (Complex I) that is believed to belong to the minimal assembly required for catalysis. Complex I functions in the transfer of electrons from NADH to the respiratory chain. The immediate electron acceptor for the enzyme is believed to be ubiquinone. This Dictyostelium discoideum (Social amoeba) protein is NADH-ubiquinone oxidoreductase subunit 9 (nad9).